The primary structure comprises 233 residues: Probable translation initiation factor, mitochondrial (233 aa).

A mitochondrion-targeting transit peptide spans 1–39; sequence MNSYLQFPHRKLFIQFSYSLTSVFRKCQSRTFMNSQFAS.

This sequence belongs to the IF-3 family.

Its subcellular location is the mitochondrion. In terms of biological role, may be involved in mitochondrial translation initiation. In Schizosaccharomyces pombe (strain 972 / ATCC 24843) (Fission yeast), this protein is Probable translation initiation factor, mitochondrial.